The chain runs to 478 residues: MESKVLLLLALSVWLQSLTVSRGGLVAADRITRGKDFRDIESKFALRTPEDTAEDTCHLIPGVTESVANCHFNHSSKTFVVIHGWTVTGMYESWVPKLVAALYKREPDSNVIVVDWLSRAQQHYPVSAGYTKLVGQDVAKFMNWMADEFNYPLGNVHLLGYSLGAHAAGIAGSLTNKKVNRITGLDPAGPNFEYAEAPSRLSPDDADFVDVLHTFTRGSPGRSIGIQKPVGHVDIYPNGGTFQPGCNIGEALRVIAERGLGDVDQLVKCSHERSVHLFIDSLLNEENPSKAYRCNSKEAFEKGLCLSCRKNRCNNMGYEINKVRAKRSSKMYLKTRSQMPYKVFHYQVKIHFSGTESNTYTNQAFEISLYGTVAESENIPFTLPEVSTNKTYSFLLYTEVDIGELLMLKLKWISDSYFSWSNWWSSPGFDIGKIRVKAGETQKKVIFCSREKMSYLQKGKSPVIFVKCHDKSLNRKSG.

Residues 1 to 27 (MESKVLLLLALSVWLQSLTVSRGGLVA) form the signal peptide. The tract at residues 35–56 (KDFRDIESKFALRTPEDTAEDT) is interaction with GPIHBP1. Cys57 and Cys70 are oxidised to a cystine. Asn73 carries N-linked (GlcNAc...) asparagine glycosylation. A 3'-nitrotyrosine modification is found at Tyr124. Ser162 acts as the Nucleophile in catalysis. Residue Asp186 is the Charge relay system of the active site. Position 194 is a 3'-nitrotyrosine (Tyr194). Ca(2+) is bound by residues Ala197, Arg200, Ser202, and Asp205. Cysteines 246 and 269 form a disulfide. The tract at residues 246-269 (CNIGEALRVIAERGLGDVDQLVKC) is essential for determining substrate specificity. The Charge relay system role is filled by His271. 2 disulfide bridges follow: Cys294/Cys313 and Cys305/Cys308. Residues 344 to 467 (FHYQVKIHFS…KGKSPVIFVK (124 aa)) enclose the PLAT domain. Tyr346 carries the 3'-nitrotyrosine modification. Asn389 is a glycosylation site (N-linked (GlcNAc...) asparagine). The tract at residues 420-424 (WSNWW) is important for interaction with lipoprotein particles. Residues 433–437 (KIRVK) are important for heparin binding. The interaction with GPIHBP1 stretch occupies residues 446-470 (IFCSREKMSYLQKGKSPVIFVKCHD). Cys448 and Cys468 form a disulfide bridge.

Belongs to the AB hydrolase superfamily. Lipase family. In terms of assembly, homodimer. Interacts with GPIHBP1 with 1:1 stoichiometry. Interacts with APOC2; the interaction activates LPL activity in the presence of lipids. Interaction with heparan sulfate proteoglycans is required to protect LPL against loss of activity. Associates with lipoprotein particles in blood plasma. Interacts with LMF1 and SEL1L; interaction with SEL1L is required to prevent aggregation of newly synthesized LPL in the endoplasmic reticulum (ER), and for normal export of LPL from the ER to the extracellular space. Interacts with SORL1; SORL1 acts as a sorting receptor, promoting LPL localization to endosomes and later to lysosomes, leading to degradation of newly synthesized LPL. In terms of processing, tyrosine nitration after lipopolysaccharide (LPS) challenge down-regulates the lipase activity.

It localises to the cell membrane. It is found in the secreted. The protein resides in the extracellular space. Its subcellular location is the extracellular matrix. It catalyses the reaction a triacylglycerol + H2O = a diacylglycerol + a fatty acid + H(+). The enzyme catalyses a 1,2-diacyl-sn-glycero-3-phosphocholine + H2O = a 2-acyl-sn-glycero-3-phosphocholine + a fatty acid + H(+). The catalysed reaction is 1,2,3-tri-(9Z-octadecenoyl)-glycerol + H2O = di-(9Z)-octadecenoylglycerol + (9Z)-octadecenoate + H(+). It carries out the reaction 1,2-di-(9Z-octadecenoyl)-sn-glycero-3-phosphocholine + H2O = (9Z-octadecenoyl)-sn-glycero-3-phosphocholine + (9Z)-octadecenoate + H(+). It catalyses the reaction 1,2,3-tributanoylglycerol + H2O = dibutanoylglycerol + butanoate + H(+). The enzyme catalyses 1,2-dihexadecanoyl-sn-glycero-3-phosphocholine + H2O = hexadecanoyl-sn-glycero-3-phosphocholine + hexadecanoate + H(+). With respect to regulation, the apolipoprotein APOC2 acts as a coactivator of LPL activity. Ca(2+) binding promotes protein stability and formation of the active homodimer. Interaction with GPIHBP1 protects LPL against inactivation by ANGPTL4. Key enzyme in triglyceride metabolism. Catalyzes the hydrolysis of triglycerides from circulating chylomicrons and very low density lipoproteins (VLDL), and thereby plays an important role in lipid clearance from the blood stream, lipid utilization and storage. Although it has both phospholipase and triglyceride lipase activities it is primarily a triglyceride lipase with low but detectable phospholipase activity. Mediates margination of triglyceride-rich lipoprotein particles in capillaries. Recruited to its site of action on the luminal surface of vascular endothelium by binding to GPIHBP1 and cell surface heparan sulfate proteoglycans. The protein is Lipoprotein lipase (LPL) of Ovis aries (Sheep).